The sequence spans 818 residues: Serine/threonine-protein phosphatase 4 regulatory subunit 3 (818 aa).

In terms of domain architecture, WH1 spans 1–100; it reads MTDTRRRVKV…DEIWEKICQV (100 aa). Residues 670-681 are compositionally biased toward acidic residues; sequence FNTDEEDLEDGE. The interval 670 to 818 is disordered; that stretch reads FNTDEEDLED…PLSKKSKLSS (149 aa). Residues 703–718 are compositionally biased toward basic and acidic residues; it reads FMERKKLKDSEEKEVL. Positions 729-775 are enriched in low complexity; the sequence is SPSFKLSFSSSPKASLSSPPTASLHPGSPGSPSSPGTGARSSPPSAA. Phosphoserine occurs at positions 769 and 770. Acidic residues predominate over residues 788-803; it reads YPDDDEEDEDEEDADS.

It belongs to the SMEK family. As to quaternary structure, serine/threonine-protein phosphatase 4 (PP4) occurs in different assemblies of the catalytic and one or more regulatory subunits.

Regulatory subunit of serine/threonine-protein phosphatase 4. The protein is Serine/threonine-protein phosphatase 4 regulatory subunit 3 (smek1) of Danio rerio (Zebrafish).